Here is a 396-residue protein sequence, read N- to C-terminus: MDISKLLKDRKILILIIFVTLSVFLIVFKGLDFGIDLSGGTIIVLKAEKPMSDKEIEATIKIITERLNYNGLNDVVIYPRGNDEIIVEIPKSCDTDRIIKILKQQGVFVAKIDNITAYTGSDVQNVELPTKIPQGETWAYGVPFELTLEGAKKFAEVAKGKAYHKVELYMDGKLISAPVLSPDLADGKPHPQQVITVGAYPPTKEEIDEAMAIYSALKSGALPVKLDIEYISTISPEFGKEFLKGTAIALLLAFIAVGIIVSIRYKQPKIAIPILITCISEVIIILGFASLIDWKLDLPSIAGIIAAVGTGVDNQIVITDEALKRGAGKIRASIKRAFFIIFASAATSIAAMLPLFVLGVGMLKGFAITTIAGVLIGIFITRPAFARIIEEMFKKF.

The next 6 membrane-spanning stretches (helical) occupy residues isoleucine 12 to aspartate 32, leucine 243 to isoleucine 263, isoleucine 272 to isoleucine 292, leucine 298 to isoleucine 318, phenylalanine 338 to leucine 358, and valine 360 to isoleucine 380.

It belongs to the SecD/SecF family. SecD subfamily. In terms of assembly, part of the protein translocation apparatus. Forms a complex with SecF.

Its subcellular location is the cell membrane. Involved in protein export. The sequence is that of Protein-export membrane protein SecD from Methanocaldococcus jannaschii (strain ATCC 43067 / DSM 2661 / JAL-1 / JCM 10045 / NBRC 100440) (Methanococcus jannaschii).